Here is a 436-residue protein sequence, read N- to C-terminus: Adenylosuccinate synthetase (436 aa).

Residues 12–18 (GDEGKGK) and 40–42 (GHT) each bind GTP. The active-site Proton acceptor is Asp13. Asp13 and Gly40 together coordinate Mg(2+). IMP-binding positions include 13 to 16 (DEGK), 38 to 41 (NAGH), Thr128, Arg142, Gln223, Thr238, and Arg302. His41 acts as the Proton donor in catalysis. 298-304 (TTTGRRR) is a substrate binding site. GTP is bound by residues Arg304, 330 to 332 (KLD), and 412 to 414 (SLG).

This sequence belongs to the adenylosuccinate synthetase family. Homodimer. The cofactor is Mg(2+).

The protein localises to the cytoplasm. The catalysed reaction is IMP + L-aspartate + GTP = N(6)-(1,2-dicarboxyethyl)-AMP + GDP + phosphate + 2 H(+). Its pathway is purine metabolism; AMP biosynthesis via de novo pathway; AMP from IMP: step 1/2. Its function is as follows. Plays an important role in the de novo pathway of purine nucleotide biosynthesis. Catalyzes the first committed step in the biosynthesis of AMP from IMP. This is Adenylosuccinate synthetase from Prochlorococcus marinus subsp. pastoris (strain CCMP1986 / NIES-2087 / MED4).